The following is an 86-amino-acid chain: UPF0297 protein SH1302 (86 aa).

This sequence belongs to the UPF0297 family.

The sequence is that of UPF0297 protein SH1302 from Staphylococcus haemolyticus (strain JCSC1435).